The primary structure comprises 239 residues: Probable fimbrial chaperone YehC (239 aa).

The signal sequence occupies residues 1–31; that stretch reads MAAIPWRPFNLRGIKMKGLLSLLIFSMVLPA.

This sequence belongs to the periplasmic pilus chaperone family.

It is found in the periplasm. Part of the yehABCD fimbrial operon. Could contribute to adhesion to various surfaces in specific environmental niches. The protein is Probable fimbrial chaperone YehC (yehC) of Escherichia coli (strain K12).